A 433-amino-acid polypeptide reads, in one-letter code: Enolase (433 aa).

Gln-167 provides a ligand contact to (2R)-2-phosphoglycerate. Glu-209 functions as the Proton donor in the catalytic mechanism. Mg(2+) contacts are provided by Asp-246, Glu-291, and Asp-318. 4 residues coordinate (2R)-2-phosphoglycerate: Lys-343, Arg-372, Ser-373, and Lys-394. The active-site Proton acceptor is the Lys-343.

The protein belongs to the enolase family. In terms of assembly, component of the RNA degradosome, a multiprotein complex involved in RNA processing and mRNA degradation. Mg(2+) is required as a cofactor.

The protein localises to the cytoplasm. It localises to the secreted. Its subcellular location is the cell surface. The catalysed reaction is (2R)-2-phosphoglycerate = phosphoenolpyruvate + H2O. It functions in the pathway carbohydrate degradation; glycolysis; pyruvate from D-glyceraldehyde 3-phosphate: step 4/5. Its function is as follows. Catalyzes the reversible conversion of 2-phosphoglycerate (2-PG) into phosphoenolpyruvate (PEP). It is essential for the degradation of carbohydrates via glycolysis. This is Enolase from Tolumonas auensis (strain DSM 9187 / NBRC 110442 / TA 4).